Reading from the N-terminus, the 353-residue chain is Photosystem II protein D1 (353 aa).

Position 2 is an N-acetylthreonine (threonine 2). Threonine 2 is modified (phosphothreonine). 3 helical membrane-spanning segments follow: residues 29–46 (YIGW…TATS), 118–133 (HFLL…EWEL), and 142–156 (WIAV…AATA). Residue histidine 118 participates in chlorophyll a binding. Pheophytin a is bound at residue tyrosine 126. Positions 170 and 189 each coordinate [CaMn4O5] cluster. A helical membrane pass occupies residues 197 to 218 (FHMLGVAGVFGGSLFSAMHGSL). Chlorophyll a is bound at residue histidine 198. Residues histidine 215 and 264–265 (SF) contribute to the a quinone site. Histidine 215 provides a ligand contact to Fe cation. Histidine 272 provides a ligand contact to Fe cation. Residues 274-288 (FLAAWPVVGIWFTAL) traverse the membrane as a helical segment. Histidine 332, glutamate 333, aspartate 342, and alanine 344 together coordinate [CaMn4O5] cluster. Residues 345-353 (AIEAPSTNG) constitute a propeptide that is removed on maturation.

The protein belongs to the reaction center PufL/M/PsbA/D family. As to quaternary structure, PSII is composed of 1 copy each of membrane proteins PsbA, PsbB, PsbC, PsbD, PsbE, PsbF, PsbH, PsbI, PsbJ, PsbK, PsbL, PsbM, PsbT, PsbX, PsbY, PsbZ, Psb30/Ycf12, at least 3 peripheral proteins of the oxygen-evolving complex and a large number of cofactors. It forms dimeric complexes. The D1/D2 heterodimer binds P680, chlorophylls that are the primary electron donor of PSII, and subsequent electron acceptors. It shares a non-heme iron and each subunit binds pheophytin, quinone, additional chlorophylls, carotenoids and lipids. D1 provides most of the ligands for the Mn4-Ca-O5 cluster of the oxygen-evolving complex (OEC). There is also a Cl(-1) ion associated with D1 and D2, which is required for oxygen evolution. The PSII complex binds additional chlorophylls, carotenoids and specific lipids. serves as cofactor. Post-translationally, tyr-161 forms a radical intermediate that is referred to as redox-active TyrZ, YZ or Y-Z. In terms of processing, C-terminally processed by CTPA; processing is essential to allow assembly of the oxygen-evolving complex and thus photosynthetic growth.

The protein resides in the plastid. It localises to the chloroplast thylakoid membrane. It carries out the reaction 2 a plastoquinone + 4 hnu + 2 H2O = 2 a plastoquinol + O2. Functionally, photosystem II (PSII) is a light-driven water:plastoquinone oxidoreductase that uses light energy to abstract electrons from H(2)O, generating O(2) and a proton gradient subsequently used for ATP formation. It consists of a core antenna complex that captures photons, and an electron transfer chain that converts photonic excitation into a charge separation. The D1/D2 (PsbA/PsbD) reaction center heterodimer binds P680, the primary electron donor of PSII as well as several subsequent electron acceptors. The protein is Photosystem II protein D1 of Citrus sinensis (Sweet orange).